We begin with the raw amino-acid sequence, 35 residues long: Photosystem II reaction center protein Psb30 (35 aa).

Residues 7 to 27 (LIANFGALALITLAGPAVIFI) form a helical membrane-spanning segment.

It belongs to the Psb30/Ycf12 family. PSII is composed of 1 copy each of membrane proteins PsbA, PsbB, PsbC, PsbD, PsbE, PsbF, PsbH, PsbI, PsbJ, PsbK, PsbL, PsbM, PsbT, PsbX, PsbY, PsbZ, Psb30/Ycf12, peripheral proteins PsbO, CyanoQ (PsbQ), PsbU, PsbV and a large number of cofactors. It forms dimeric complexes.

It is found in the cellular thylakoid membrane. Its function is as follows. A core subunit of photosystem II (PSII), probably helps stabilize the reaction center. This is Photosystem II reaction center protein Psb30 from Synechococcus sp. (strain CC9311).